Consider the following 137-residue polypeptide: Probable 4-amino-4-deoxy-L-arabinose-phosphoundecaprenol flippase subunit ArnF (137 aa).

The Cytoplasmic segment spans residues 1-3 (MNA). The helical transmembrane segment at 4–24 (LRGWLAALGSMLLASAAQLGM) threads the bilayer. At 25-44 (RWGMSRLPLPEAWAGQTPER) the chain is on the periplasmic side. Residues 45–65 (AALLAVALAVAAYAASLLCWL) form a helical membrane-spanning segment. Residues 66–76 (AALRHLPLGRA) lie on the Cytoplasmic side of the membrane. Residues 77 to 97 (YSLLSASYALVYLLAASLPAF) form a helical membrane-spanning segment. The Periplasmic portion of the chain corresponds to 98–100 (DET). The chain crosses the membrane as a helical span at residues 101–121 (FSTSKILGVGLVVLGVLTVNA). The Cytoplasmic segment spans residues 122-137 (RRTAAAPAHHPSRKAP).

It belongs to the ArnF family. In terms of assembly, heterodimer of ArnE and ArnF.

The protein resides in the cell inner membrane. It participates in bacterial outer membrane biogenesis; lipopolysaccharide biosynthesis. In terms of biological role, translocates 4-amino-4-deoxy-L-arabinose-phosphoundecaprenol (alpha-L-Ara4N-phosphoundecaprenol) from the cytoplasmic to the periplasmic side of the inner membrane. This chain is Probable 4-amino-4-deoxy-L-arabinose-phosphoundecaprenol flippase subunit ArnF, found in Pseudomonas aeruginosa (strain LESB58).